Here is a 1159-residue protein sequence, read N- to C-terminus: DNA-directed RNA polymerase subunit beta (1159 aa).

This sequence belongs to the RNA polymerase beta chain family. The RNAP catalytic core consists of 2 alpha, 1 beta, 1 beta' and 1 omega subunit. When a sigma factor is associated with the core the holoenzyme is formed, which can initiate transcription.

The catalysed reaction is RNA(n) + a ribonucleoside 5'-triphosphate = RNA(n+1) + diphosphate. DNA-dependent RNA polymerase catalyzes the transcription of DNA into RNA using the four ribonucleoside triphosphates as substrates. The sequence is that of DNA-directed RNA polymerase subunit beta from Deinococcus radiodurans (strain ATCC 13939 / DSM 20539 / JCM 16871 / CCUG 27074 / LMG 4051 / NBRC 15346 / NCIMB 9279 / VKM B-1422 / R1).